Consider the following 258-residue polypeptide: Phosphate import ATP-binding protein PstB (258 aa).

Residues 13 to 253 (IEVENLNLWY…PKEQSTEDYI (241 aa)) enclose the ABC transporter domain. 45-52 (GPSGCGKS) contributes to the ATP binding site.

It belongs to the ABC transporter superfamily. Phosphate importer (TC 3.A.1.7) family. As to quaternary structure, the complex is composed of two ATP-binding proteins (PstB), two transmembrane proteins (PstC and PstA) and a solute-binding protein (PstS).

Its subcellular location is the cell membrane. It carries out the reaction phosphate(out) + ATP + H2O = ADP + 2 phosphate(in) + H(+). Functionally, part of the ABC transporter complex PstSACB involved in phosphate import. Responsible for energy coupling to the transport system. The sequence is that of Phosphate import ATP-binding protein PstB from Methanosarcina acetivorans (strain ATCC 35395 / DSM 2834 / JCM 12185 / C2A).